The following is a 497-amino-acid chain: Probable cytosol aminopeptidase (497 aa).

The Mn(2+) site is built by lysine 267 and aspartate 272. Residue lysine 279 is part of the active site. Residues aspartate 290, aspartate 349, and glutamate 351 each contribute to the Mn(2+) site. The active site involves arginine 353.

This sequence belongs to the peptidase M17 family. Mn(2+) serves as cofactor.

The protein resides in the cytoplasm. The enzyme catalyses Release of an N-terminal amino acid, Xaa-|-Yaa-, in which Xaa is preferably Leu, but may be other amino acids including Pro although not Arg or Lys, and Yaa may be Pro. Amino acid amides and methyl esters are also readily hydrolyzed, but rates on arylamides are exceedingly low.. It catalyses the reaction Release of an N-terminal amino acid, preferentially leucine, but not glutamic or aspartic acids.. Functionally, presumably involved in the processing and regular turnover of intracellular proteins. Catalyzes the removal of unsubstituted N-terminal amino acids from various peptides. This is Probable cytosol aminopeptidase from Nitrosomonas eutropha (strain DSM 101675 / C91 / Nm57).